A 525-amino-acid chain; its full sequence is GMP synthase [glutamine-hydrolyzing] (525 aa).

The Glutamine amidotransferase type-1 domain maps to 9–207; sequence RILILDFGSQ…VRDICQCEAL (199 aa). C86 (nucleophile) is an active-site residue. Residues H181 and E183 contribute to the active site. Residues 208–400 form the GMPS ATP-PPase domain; sequence WTPAKIIDDA…LGLPYDMLYR (193 aa). Residue 235 to 241 coordinates ATP; sequence SGGVDSS.

Homodimer.

It carries out the reaction XMP + L-glutamine + ATP + H2O = GMP + L-glutamate + AMP + diphosphate + 2 H(+). It functions in the pathway purine metabolism; GMP biosynthesis; GMP from XMP (L-Gln route): step 1/1. Its function is as follows. Catalyzes the synthesis of GMP from XMP. This is GMP synthase [glutamine-hydrolyzing] from Salmonella typhi.